The following is a 437-amino-acid chain: 3-phosphoshikimate 1-carboxyvinyltransferase (437 aa).

3-phosphoshikimate is bound by residues K26, S27, and R31. K26 is a binding site for phosphoenolpyruvate. Phosphoenolpyruvate is bound by residues G99 and R127. The 3-phosphoshikimate site is built by S172, Q174, D320, and K347. Q174 serves as a coordination point for phosphoenolpyruvate. Catalysis depends on D320, which acts as the Proton acceptor. Residues R351 and R392 each contribute to the phosphoenolpyruvate site.

Belongs to the EPSP synthase family. In terms of assembly, monomer.

The protein localises to the cytoplasm. It carries out the reaction 3-phosphoshikimate + phosphoenolpyruvate = 5-O-(1-carboxyvinyl)-3-phosphoshikimate + phosphate. It participates in metabolic intermediate biosynthesis; chorismate biosynthesis; chorismate from D-erythrose 4-phosphate and phosphoenolpyruvate: step 6/7. In terms of biological role, catalyzes the transfer of the enolpyruvyl moiety of phosphoenolpyruvate (PEP) to the 5-hydroxyl of shikimate-3-phosphate (S3P) to produce enolpyruvyl shikimate-3-phosphate and inorganic phosphate. In Methylococcus capsulatus (strain ATCC 33009 / NCIMB 11132 / Bath), this protein is 3-phosphoshikimate 1-carboxyvinyltransferase.